The sequence spans 294 residues: Xyloglucan endotransglucosylase protein 34 (294 aa).

An N-terminal signal peptide occupies residues 1–22 (MAAAYPWTLFLGMLVMVSGTMG). Residues 23 to 221 (AALRKPVDVA…WSKAPFIASY (199 aa)) form the GH16 domain. Glutamate 107 functions as the Nucleophile in the catalytic mechanism. Residue glutamate 111 is the Proton donor of the active site. A xyloglucan-binding site is contributed by glutamate 111. Asparagine 115 is a glycosylation site (N-linked (GlcNAc...) asparagine). Residues 124 to 126 (QTN), 134 to 136 (DRE), 200 to 201 (DW), and glycine 205 contribute to the xyloglucan site. 2 disulfide bridges follow: cysteine 229–cysteine 238 and cysteine 275–cysteine 288. A xyloglucan-binding site is contributed by arginine 280.

The protein belongs to the glycosyl hydrolase 16 family. XTH group 1 subfamily. In terms of processing, contains at least one intrachain disulfide bond essential for its enzymatic activity. N-glycosylated. Contains N-acetylglucosamine and mannose. Glycosylation is not essential for its catalytic activity. In terms of tissue distribution, expressed in mature gelatinous (G) cell wall layer of the tension wood fibers. Highly expressed in the outer zone of the G layer close to the secondary S2 layer. Not expressed in the mature walls of the ray cells or vessel elements (at protein level). Highest expression in both the phloem/cambium and differentiating xylem of the mature stem containing primarily secondary cell wall forming cells, in root tips and young roots. Expressed at low levels in apical bud.

The protein localises to the secreted. Its subcellular location is the cell wall. The protein resides in the extracellular space. It localises to the apoplast. It is found in the cytoplasm. It catalyses the reaction breaks a beta-(1-&gt;4) bond in the backbone of a xyloglucan and transfers the xyloglucanyl segment on to O-4 of the non-reducing terminal glucose residue of an acceptor, which can be a xyloglucan or an oligosaccharide of xyloglucan.. Its function is as follows. Catalyzes xyloglucan endotransglycosylation (XET). Cleaves and religates xyloglucan polymers. Does not catalyze xyloglucan endohydrolysis (XEH). Involved in early phases of secondary (S) cell wall formation in fibers of the xylem and phloem vascular tissues of wood stems. May play a role in restructuring primary cell walls, possibly creating and reinforcing the connections between the primary and S cell wall layers. Functions in the gelatinous (G) layers of the tension wood fibers that are involved in bending of the wood stems. May play a role in G fiber shrinking by repairing broken xyloglucan cross-links between G and S2 cell wall layers via its XET activity to maintain connections between the layers. In Populus tremula x Populus tremuloides (Hybrid aspen), this protein is Xyloglucan endotransglucosylase protein 34.